A 247-amino-acid polypeptide reads, in one-letter code: Probable transcriptional regulatory protein Syncc9605_2132 (247 aa).

This sequence belongs to the TACO1 family.

It is found in the cytoplasm. The sequence is that of Probable transcriptional regulatory protein Syncc9605_2132 from Synechococcus sp. (strain CC9605).